The following is a 49-amino-acid chain: Osteocalcin (49 aa).

The Gla domain occupies 1-47; sequence YLDPGLGAPAPYPDPLEPKREVCELNPDCDELADHIGFQEAYRRFYG. Pro-9 is subject to Hydroxyproline. Ca(2+)-binding residues include Glu-17, Glu-21, Glu-24, and Asp-30. 3 positions are modified to 4-carboxyglutamate: Glu-17, Glu-21, and Glu-24. Cys-23 and Cys-29 are disulfide-bonded.

It belongs to the osteocalcin/matrix Gla protein family. Post-translationally, gamma-carboxyglutamate residues are formed by vitamin K dependent carboxylation by GGCX. These residues are essential for the binding of calcium. Decarboxylation promotes the hormone activity.

The protein localises to the secreted. The carboxylated form is one of the main organic components of the bone matrix, which constitutes 1-2% of the total bone protein. It acts as a negative regulator of bone formation and is required to limit bone formation without impairing bone resorption or mineralization. The carboxylated form binds strongly to apatite and calcium. In terms of biological role, the uncarboxylated form acts as a hormone secreted by osteoblasts, which regulates different cellular processes, such as energy metabolism, male fertility and brain development. Regulates of energy metabolism by acting as a hormone favoring pancreatic beta-cell proliferation, insulin secretion and sensitivity and energy expenditure. Uncarboxylated osteocalcin hormone also promotes testosterone production in the testes: acts as a ligand for G protein-coupled receptor GPRC6A at the surface of Leydig cells, initiating a signaling response that promotes the expression of enzymes required for testosterone synthesis in a CREB-dependent manner. Also acts as a regulator of brain development: osteocalcin hormone crosses the blood-brain barrier and acts as a ligand for GPR158 on neurons, initiating a signaling response that prevents neuronal apoptosis in the hippocampus, favors the synthesis of all monoamine neurotransmitters and inhibits that of gamma-aminobutyric acid (GABA). Osteocalcin also crosses the placenta during pregnancy and maternal osteocalcin is required for fetal brain development. In Capra hircus (Goat), this protein is Osteocalcin (BGLAP).